A 157-amino-acid polypeptide reads, in one-letter code: uncharacterized protein (157 aa).

4 consecutive transmembrane segments (helical) span residues 29–49, 52–72, 93–113, and 117–137; these read LLII…PAYF, VLHV…GFGI, LGSV…RTWL, and NEMF…TITA.

The protein resides in the cell membrane. This is an uncharacterized protein from Bacillus subtilis (strain 168).